We begin with the raw amino-acid sequence, 54 residues long: Ovomucoid (54 aa).

The 51-residue stretch at 4-54 (VDCSDYPKPACTLEYMPLCGSDNKTYGNRCNFCNAVVDSNGTLTLSHFGKC) folds into the Kazal-like domain. Cystine bridges form between Cys6–Cys36, Cys14–Cys33, and Cys22–Cys54. Asn43 carries N-linked (GlcNAc...) asparagine glycosylation.

It is found in the secreted. In Dendrocygna viduata (White-faced whistling-duck), this protein is Ovomucoid.